The following is a 316-amino-acid chain: Pantothenate kinase (316 aa).

An ATP-binding site is contributed by 95 to 102; sequence GSVAVGKS.

It belongs to the prokaryotic pantothenate kinase family.

The protein localises to the cytoplasm. It catalyses the reaction (R)-pantothenate + ATP = (R)-4'-phosphopantothenate + ADP + H(+). The protein operates within cofactor biosynthesis; coenzyme A biosynthesis; CoA from (R)-pantothenate: step 1/5. This Klebsiella pneumoniae (strain 342) protein is Pantothenate kinase.